The sequence spans 132 residues: Ubiquinol-cytochrome c reductase complex assembly factor 4 (132 aa).

The first 15 residues, 1 to 15 (MNRVLCAPAAGAVRA), serve as a signal peptide directing secretion. Topologically, residues 16–78 (LRLIGWASRS…GKGHQRPWWK (63 aa)) are mitochondrial matrix. A disordered region spans residues 29–72 (LPGSRDRAHPAAEEEDDPDRPIEFSSSKANPHRWSVGHTMGKGH). A helical transmembrane segment spans residues 79–95 (VLPLSCFLVALIIWCYL). Residues 96–132 (REESEADQWLRQVWGEVPEPSDRSEEPETPAAYRART) are Mitochondrial intermembrane-facing. A disordered region spans residues 110-132 (GEVPEPSDRSEEPETPAAYRART).

The protein belongs to the UQCC4 family. As to quaternary structure, forms a complex, named COMB/coordinator of mitochondrial CYTB biogenesis, composed of UQCC1, UQCC2, UQCC4, UQCC5 and UQCC6; stabilizes nascent cytochrome b/MT-CYB and promotes its membrane insertion. Forms a complex, named COMA, composed of UQCC1, UQCC2 and UQCC4; activates MT-CYB translation. Forms a complex, named COMC, composed of UQCC1, UQCC2; UQCC3 and UQCC4; mediates MT-CYB hemylation and association with the first nuclear-encoded complex III subunit UQCRQ. Complexes COMA and COMB are bound to the mitochondrion inner membrane by UQCC4.

The protein resides in the mitochondrion inner membrane. Its function is as follows. Required for the assembly and stability of the mitochondrial ubiquinol-cytochrome c reductase complex (complex III (CIII) or cytochrome b-c1 complex), a multisubunit transmembrane complex that is part of the mitochondrial electron transport chain (ETC) which drives oxidative phosphorylation. In Homo sapiens (Human), this protein is Ubiquinol-cytochrome c reductase complex assembly factor 4.